We begin with the raw amino-acid sequence, 488 residues long: Signal recognition particle receptor FtsY (488 aa).

The segment at 14-82 (DTAPEDVSKP…AVPDDAVHGG (69 aa)) is disordered. Residues 32–67 (VGTSSTGSPVGTGAAMPAAQDAPSPAAPHAIATPDD) are compositionally biased toward low complexity. Residues 287 to 294 (GVNGVGKT), 369 to 373 (DTAGR), and 433 to 436 (TKLD) contribute to the GTP site.

The protein belongs to the GTP-binding SRP family. FtsY subfamily. In terms of assembly, part of the signal recognition particle protein translocation system, which is composed of SRP and FtsY. SRP is a ribonucleoprotein composed of Ffh and a 4.5S RNA molecule.

It is found in the cell inner membrane. The protein resides in the cytoplasm. It catalyses the reaction GTP + H2O = GDP + phosphate + H(+). Involved in targeting and insertion of nascent membrane proteins into the cytoplasmic membrane. Acts as a receptor for the complex formed by the signal recognition particle (SRP) and the ribosome-nascent chain (RNC). Interaction with SRP-RNC leads to the transfer of the RNC complex to the Sec translocase for insertion into the membrane, the hydrolysis of GTP by both Ffh and FtsY, and the dissociation of the SRP-FtsY complex into the individual components. This chain is Signal recognition particle receptor FtsY, found in Nitratidesulfovibrio vulgaris (strain ATCC 29579 / DSM 644 / CCUG 34227 / NCIMB 8303 / VKM B-1760 / Hildenborough) (Desulfovibrio vulgaris).